The primary structure comprises 301 residues: uncharacterized protein (301 aa).

A signal peptide spans 1–26 (MKGFSCSRPGYLTGLLLLAVAPILTA). The N-palmitoyl cysteine moiety is linked to residue Cys27. The S-diacylglycerol cysteine moiety is linked to residue Cys27. Residues 46 to 243 (KLKPATIEYW…YNAKINIWSH (198 aa)) enclose the TNase-like domain. Residues 64 to 136 (NYASEERRKE…SKGDSTGDEK (73 aa)) form a disordered region. Basic and acidic residues-rich tracts occupy residues 67–95 (SEERRKEAEQKSKENAKKEDKKEEKKTED) and 120–136 (TPEKHVSSKGDSTGDEK).

It is found in the cell membrane. This is an uncharacterized protein from Mycoplasma pneumoniae (strain ATCC 29342 / M129 / Subtype 1) (Mycoplasmoides pneumoniae).